We begin with the raw amino-acid sequence, 185 residues long: UPF0397 protein LBA0922 (185 aa).

5 helical membrane-spanning segments follow: residues 11-31 (VVAI…TSIP), 45-65 (FLAF…GFIG), 72-92 (IMYG…GWII), 111-131 (IILF…VVAP), and 146-166 (FVQG…IGTI).

It belongs to the UPF0397 family.

The protein resides in the cell membrane. This is UPF0397 protein LBA0922 from Lactobacillus acidophilus (strain ATCC 700396 / NCK56 / N2 / NCFM).